A 701-amino-acid polypeptide reads, in one-letter code: MHHIVEVDLGDRKITLETGKMAKQANGAVVVRSGDAVVLVTACMADQPKPSAGFFPLTVDYREYTYAAGKIPGGFIKREGRLSEKEVLTCRLIDRPIRPLFPEGFMNETQIIAMVLSADPEQDPNSLAIVGTAAALAISDIPFQYVMAGVRVGMRDGQYTANPTYTEGRASKLNIVVAGTEEGIVMVEAGAQEVSEAEVLGAIEFGHECCKKIAAGIRQLMKLCGKTKREFVSPVLDETIYAEVEKQARVDLTDALNTEKHEKLASYALVASVKKRTIEALPDEQKEQGAKCFDALKERIFRDDMLKKHRRPDGREFDQIRQITIETGVLPRVHGSTLFTRGETQALVTVTLGTKDDEQRIELLEPGEASKRFMLHYNFPPFSVGEVGFMRGAGRREIGHGALAERALTALIPGEDKFPYTMRVVSDTLESNGSSSMAAICGGSLALMQAGVPMTAHVGGVAMGLVMEGKDYAILTDIAGAEDHYGDMDFKVAGTRDGITGMQMDIKVPNITTAIMKEALEQARRGRLFILDKMYEAMPQANTAISQYAPRIYTLHIPTDKIRDVIGPGGKVIRGIIEQTGVKIDVEDDGTIHVASADEASANKAIQIISDLTATAEIGKTYLGKVVRLVDFGAFVEIFPGTDGLLHISEIAENRIKDVRDELKEGDQILVKCLALEGNKIKLSRKAVLKEQREKMKQGKE.

Positions 483 and 489 each coordinate Mg(2+). Positions 550 to 609 (PRIYTLHIPTDKIRDVIGPGGKVIRGIIEQTGVKIDVEDDGTIHVASADEASANKAIQII) constitute a KH domain. The region spanning 619–686 (GKTYLGKVVR…EGNKIKLSRK (68 aa)) is the S1 motif domain.

It belongs to the polyribonucleotide nucleotidyltransferase family. Requires Mg(2+) as cofactor.

It localises to the cytoplasm. The enzyme catalyses RNA(n+1) + phosphate = RNA(n) + a ribonucleoside 5'-diphosphate. In terms of biological role, involved in mRNA degradation. Catalyzes the phosphorolysis of single-stranded polyribonucleotides processively in the 3'- to 5'-direction. This is Polyribonucleotide nucleotidyltransferase from Solibacter usitatus (strain Ellin6076).